A 138-amino-acid chain; its full sequence is Diuretic hormone 1 (138 aa).

Residues 1-19 (MMWWAIWCVMVVVSSAASA) form the signal peptide. The propeptide occupies 20 to 78 (APAPDSAPMDLVQIDSAGPDDESLGYAVSSLEGRYGAEAPWLYLLAEMPRDSQIGRAAV). Ile-121 carries the post-translational modification Isoleucine amide. The propeptide occupies 125–138 (GLQWSRSEQPSAYY).

This sequence belongs to the sauvagine/corticotropin-releasing factor/urotensin I family.

It is found in the secreted. Its function is as follows. Regulation of fluid secretion. The polypeptide is Diuretic hormone 1 (Manduca sexta (Tobacco hawkmoth)).